Reading from the N-terminus, the 72-residue chain is Translation initiation factor IF-1 (72 aa).

Residues 1 to 72 (MTKEEAIEVD…SRGRIMFRER (72 aa)) form the S1-like domain.

This sequence belongs to the IF-1 family. As to quaternary structure, component of the 30S ribosomal translation pre-initiation complex which assembles on the 30S ribosome in the order IF-2 and IF-3, IF-1 and N-formylmethionyl-tRNA(fMet); mRNA recruitment can occur at any time during PIC assembly.

Its subcellular location is the cytoplasm. One of the essential components for the initiation of protein synthesis. Stabilizes the binding of IF-2 and IF-3 on the 30S subunit to which N-formylmethionyl-tRNA(fMet) subsequently binds. Helps modulate mRNA selection, yielding the 30S pre-initiation complex (PIC). Upon addition of the 50S ribosomal subunit IF-1, IF-2 and IF-3 are released leaving the mature 70S translation initiation complex. The chain is Translation initiation factor IF-1 from Treponema pallidum (strain Nichols).